The chain runs to 184 residues: Protein GrpE (184 aa).

Residues 1–17 (MQHEDKTPEQQENKTPE) show a composition bias toward basic and acidic residues. Residues 1–39 (MQHEDKTPEQQENKTPETELQQENAPATPQEAGAAGSID) form a disordered region. The span at 18-27 (TELQQENAPA) shows a compositional bias: polar residues.

It belongs to the GrpE family. Homodimer.

It localises to the cytoplasm. Its function is as follows. Participates actively in the response to hyperosmotic and heat shock by preventing the aggregation of stress-denatured proteins, in association with DnaK and GrpE. It is the nucleotide exchange factor for DnaK and may function as a thermosensor. Unfolded proteins bind initially to DnaJ; upon interaction with the DnaJ-bound protein, DnaK hydrolyzes its bound ATP, resulting in the formation of a stable complex. GrpE releases ADP from DnaK; ATP binding to DnaK triggers the release of the substrate protein, thus completing the reaction cycle. Several rounds of ATP-dependent interactions between DnaJ, DnaK and GrpE are required for fully efficient folding. This chain is Protein GrpE, found in Methylobacillus flagellatus (strain ATCC 51484 / DSM 6875 / VKM B-1610 / KT).